A 197-amino-acid polypeptide reads, in one-letter code: MSNVLVLKSSILGDYSQSNGLIDHLVSSWGDSVSSVIERDLVATPIPVLDGEIAGGLRGGDTLTARQEEALALSDMLINELQNSDTIVIAAPMYNFSVPTQLKNWFDIIARAGVTFSYTENGPVGLITGKKVIVVTTRGGMHKDGPTDTMVPYLKTILGFIGLTDVEFVYGEALAMGEEMAAKGITNAKSALEKISA.

FMN-binding positions include Ser-10, 16–18 (SQS), 93–96 (MYNF), and 137–140 (TRGG).

Belongs to the azoreductase type 1 family. In terms of assembly, homodimer. Requires FMN as cofactor.

It catalyses the reaction 2 a quinone + NADH + H(+) = 2 a 1,4-benzosemiquinone + NAD(+). It carries out the reaction N,N-dimethyl-1,4-phenylenediamine + anthranilate + 2 NAD(+) = 2-(4-dimethylaminophenyl)diazenylbenzoate + 2 NADH + 2 H(+). Its function is as follows. Quinone reductase that provides resistance to thiol-specific stress caused by electrophilic quinones. Functionally, also exhibits azoreductase activity. Catalyzes the reductive cleavage of the azo bond in aromatic azo compounds to the corresponding amines. This chain is FMN-dependent NADH:quinone oxidoreductase 1, found in Photobacterium profundum (strain SS9).